Here is a 563-residue protein sequence, read N- to C-terminus: Putative ABC transporter ATP-binding protein SCO2324 (563 aa).

The ABC transporter 1 domain occupies 2–243; the sequence is IRFEDVSVTY…SPVYPPVVGL (242 aa). 36 to 43 is an ATP binding site; sequence GPSGVGKS. Residues 271–317 are disordered; it reads AGREIPDHTPPPSAPLPAPPAPRPVTSRWRRRGKRPENPSAPTPYAA. The segment covering 278-293 has biased composition (pro residues); it reads HTPPPSAPLPAPPAPR. In terms of domain architecture, ABC transporter 2 spans 317 to 545; the sequence is AEVRSLAVRR…SPSYAPQVAK (229 aa). Residue 349–356 coordinates ATP; it reads GRNGAGKS.

Belongs to the ABC transporter superfamily.

The protein resides in the cell membrane. In terms of biological role, probably part of an ABC transporter complex. Responsible for energy coupling to the transport system. The sequence is that of Putative ABC transporter ATP-binding protein SCO2324 from Streptomyces coelicolor (strain ATCC BAA-471 / A3(2) / M145).